The chain runs to 727 residues: Beta-galactosidase 2 (727 aa).

The signal sequence occupies residues 1-27; that stretch reads MSMHFRNKAWIILAILCFSSLIHSTEA. E185 (proton donor) is an active-site residue. E254 serves as the catalytic Nucleophile. The N-linked (GlcNAc...) asparagine glycan is linked to N255.

The protein belongs to the glycosyl hydrolase 35 family. As to expression, ubiquitous, with higher expression levels in roots and siliques.

The protein localises to the secreted. It localises to the extracellular space. Its subcellular location is the apoplast. The catalysed reaction is Hydrolysis of terminal non-reducing beta-D-galactose residues in beta-D-galactosides.. This is Beta-galactosidase 2 (BGAL2) from Arabidopsis thaliana (Mouse-ear cress).